A 599-amino-acid polypeptide reads, in one-letter code: Sulfite reductase [NADPH] flavoprotein alpha-component (599 aa).

The Flavodoxin-like domain maps to 64–202; sequence ITIISASQTG…AASEWRARVV (139 aa). FMN is bound by residues 70 to 75, 117 to 120, and 153 to 162; these read SQTGNA, STQG, and LGDSSYEFFC. An FAD-binding FR-type domain is found at 234-448; it reads DAPLAASLSV…IEHNDNFRLP (215 aa). FAD-binding positions include Thr-322, Ala-356, 386–389, 404–406, Tyr-410, and 419–422; these read RLYS, TVG, and GGAS. NADP(+) contacts are provided by residues 519 to 520, 525 to 529, and Asp-561; these read SR and KIYVQ. Tyr-599 contributes to the FAD binding site.

Belongs to the NADPH-dependent sulphite reductase flavoprotein subunit CysJ family. This sequence in the N-terminal section; belongs to the flavodoxin family. The protein in the C-terminal section; belongs to the flavoprotein pyridine nucleotide cytochrome reductase family. In terms of assembly, alpha(8)-beta(8). The alpha component is a flavoprotein, the beta component is a hemoprotein. It depends on FAD as a cofactor. FMN is required as a cofactor.

The enzyme catalyses hydrogen sulfide + 3 NADP(+) + 3 H2O = sulfite + 3 NADPH + 4 H(+). Its pathway is sulfur metabolism; hydrogen sulfide biosynthesis; hydrogen sulfide from sulfite (NADPH route): step 1/1. Functionally, component of the sulfite reductase complex that catalyzes the 6-electron reduction of sulfite to sulfide. This is one of several activities required for the biosynthesis of L-cysteine from sulfate. The flavoprotein component catalyzes the electron flow from NADPH -&gt; FAD -&gt; FMN to the hemoprotein component. In Escherichia coli O6:H1 (strain CFT073 / ATCC 700928 / UPEC), this protein is Sulfite reductase [NADPH] flavoprotein alpha-component.